Here is a 551-residue protein sequence, read N- to C-terminus: Probable 4-coumarate--CoA ligase 2 (551 aa).

Residues serine 205, serine 206, glycine 207, threonine 208, threonine 209, and lysine 213 each contribute to the ATP site. (E)-4-coumaroyl-AMP-binding residues include tyrosine 253 and threonine 257. Lysine 274 contacts CoA. Residues 276 to 346 (EFVRFLDLIQ…RFKGKLIIKQ (71 aa)) are SBD1. 4 residues coordinate (E)-4-coumaroyl-AMP: alanine 323, glutamine 346, glycine 347, and threonine 351. ATP contacts are provided by glutamine 346, glycine 347, threonine 351, aspartate 430, and arginine 445. Residues 347-409 (GYGATELSPA…IKGPNVMLGY (63 aa)) form an SBD2 region. The (E)-4-coumaroyl-AMP site is built by lysine 447 and lysine 451. Positions 453 and 454 each coordinate CoA. ATP is bound at residue lysine 537.

Belongs to the ATP-dependent AMP-binding enzyme family. Mg(2+) is required as a cofactor.

The catalysed reaction is (E)-4-coumarate + ATP + CoA = (E)-4-coumaroyl-CoA + AMP + diphosphate. The enzyme catalyses (E)-4-coumarate + ATP + H(+) = (E)-4-coumaroyl-AMP + diphosphate. It carries out the reaction (E)-4-coumaroyl-AMP + CoA = (E)-4-coumaroyl-CoA + AMP + H(+). It functions in the pathway phytoalexin biosynthesis; 3,4',5-trihydroxystilbene biosynthesis; 3,4',5-trihydroxystilbene from trans-4-coumarate: step 1/2. Functionally, carboxylate--CoA ligase that may use 4-coumarate as substrate. Follows a two-step reaction mechanism, wherein the carboxylate substrate first undergoes adenylation by ATP, followed by a thioesterification in the presence of CoA to yield the final CoA thioester. The protein is Probable 4-coumarate--CoA ligase 2 (4cl2) of Dictyostelium discoideum (Social amoeba).